The sequence spans 151 residues: MNLKTHAFNDRGRIPSRYTCDGENISPPLSWDGVPGEAKSLALICDDPDAPSKVWTHWVIFNIPPDSTGLEENVPDAGRLPDGSVQGYNDSGTLGYRGPCPPSGVHRYFFRLYALDTVLDLEPGASKEDVLEAMEGHVLGEAKLIGLYRRG.

Belongs to the UPF0098 family.

This chain is UPF0098 protein MTH_273, found in Methanothermobacter thermautotrophicus (strain ATCC 29096 / DSM 1053 / JCM 10044 / NBRC 100330 / Delta H) (Methanobacterium thermoautotrophicum).